We begin with the raw amino-acid sequence, 308 residues long: Cell division protein FtsX (308 aa).

At methionine 1–valine 24 the chain is on the cytoplasmic side. The chain crosses the membrane as a helical span at residues alanine 25–phenylalanine 45. At asparagine 46–serine 178 the chain is on the extracellular side. The helical transmembrane segment at phenylalanine 179–isoleucine 199 threads the bilayer. The Cytoplasmic portion of the chain corresponds to serine 200–alanine 236. The chain crosses the membrane as a helical span at residues phenylalanine 237–valine 257. Residues tyrosine 258–aspartate 276 are Extracellular-facing. The helical transmembrane segment at leucine 277–glycine 297 threads the bilayer. Residues serine 298–isoleucine 308 lie on the Cytoplasmic side of the membrane.

The protein belongs to the ABC-4 integral membrane protein family. FtsX subfamily. In terms of assembly, homodimer. Interacts with FtsE; forms a membrane-associated complex. Interacts (via large extracellular loop) with PcsB (via N-terminal coiled-coil domain). This interaction directs PcsB to equatorial and septal sites of dividing cells.

The protein resides in the cell membrane. Part of the ABC transporter FtsEX involved in asymmetric cellular division facilitating the initiation of sporulation. Required in maintaining normal growth and cellular morphology. This chain is Cell division protein FtsX, found in Streptococcus pneumoniae serotype 2 (strain D39 / NCTC 7466).